The chain runs to 477 residues: MGALMIQGTGSNVGKSLLVAGLCRAARRRGIDVAPFKPQNMSNNAAVTPDGGEIGRAQALQARAAGLAPSVHMNPVLLKPETDRAAQVVVQGRAATRAAAADYGALKARLMGAVLDSFARLRTTHELVLVEGAGSPAEVNLRARDIANMGFARAADVPVVLAGDIDRGGVIAQIVGTQAVIDPADAAMIRGFVINRFRGDPSLFDAGRRFIVERTGWPDLGLVPWFPDAVRLPAEDAVDLRRASGGGGLHIACPMLSRIANFDDLDPLAAEPAVRLSMVPPGHALPGDADLVILPGTKSTRGDLAFLREQGWDIDLAAHLRRGGRVLGICGGYQMLGRMIHDPEGHDGSPGSTPGLGLLDIETRMAPEKRLTRIAGRALGQPVEGYEIHMGRSEGPDCARPFAHIPEPDGATSPDGRVAGTYLHGLFSGDGFRAAWLGQFGAASALDYGAGVDEVLDRLAGHLEAHLDIDRLFALAR.

The GATase cobBQ-type domain occupies 248–432 (GLHIACPMLS…LHGLFSGDGF (185 aa)). The active-site Nucleophile is C330. The active site involves H424.

This sequence belongs to the CobB/CobQ family. CobQ subfamily.

It participates in cofactor biosynthesis; adenosylcobalamin biosynthesis. Functionally, catalyzes amidations at positions B, D, E, and G on adenosylcobyrinic A,C-diamide. NH(2) groups are provided by glutamine, and one molecule of ATP is hydrogenolyzed for each amidation. This Paracoccus denitrificans (strain Pd 1222) protein is Cobyric acid synthase.